A 158-amino-acid chain; its full sequence is Transcriptional repressor NrdR (158 aa).

Residues 3-34 fold into a zinc finger; that stretch reads CPFCGNADTQVVDSRVSEEGDTIRRRRRCLSC. One can recognise an ATP-cone domain in the interval 49-139; it reads PSVVKRNGSR…VYKNFEDIGE (91 aa).

The protein belongs to the NrdR family. Zn(2+) is required as a cofactor.

In terms of biological role, negatively regulates transcription of bacterial ribonucleotide reductase nrd genes and operons by binding to NrdR-boxes. This chain is Transcriptional repressor NrdR, found in Bordetella petrii (strain ATCC BAA-461 / DSM 12804 / CCUG 43448).